A 603-amino-acid chain; its full sequence is MQTTVTTMLLASVALAACAGGGSTPLPLPQQQPPQQEPPPPPVPLASRAACEALKDGNGDMVWPNAATVVEVAAWRDAAPATASAAALPEHCEVSGAIAKRTGIDGYPYEIKFRLRMPAEWNGRFFMEGGSGTNGSLSAATGSIGGGQIASALSRNFATIATDGGHDNAVNDNPDALGTVAFGLDPQARLDMGYNSYDQVTQAGKAAVARFYGRAADKSYFIGCSEGGREGMMLSQRFPSHYDGIVAGAPGYQLPKAGISGAWTTQSLAPAAVGLDAQGVPLINKSFSDADLHLLSQAILGTCDALDGLADGIVDNYRACQAAFDPATAANPANGQALQCVGAKTADCLSPVQVTAIKRAMAGPVNSAGTPLYNRWAWDAGMSGLSGTTYNQGWRSWWLGSFNSSANNAQRVSGFSARSWLVDFATPPEPMPMTQVAARMMKFDFDIDPLKIWATSGQFTQSSMDWHGATSTDLAAFRDRGGKMILYHGMSDAAFSALDTADYYERLGAAMPGAAGFARLFLVPGMNHCSGGPGTDRFDMLTPLVAWVERGEAPDQISAWSGTPGYFGVAARTRPLCPYPQIARYKGSGDINTEANFACAAPP.

The signal sequence occupies residues 1–17; that stretch reads MQTTVTTMLLASVALAA. The N-palmitoyl cysteine moiety is linked to residue cysteine 18. A lipid anchor (S-diacylglycerol cysteine) is attached at cysteine 18. Residues 24-44 form a disordered region; it reads TPLPLPQQQPPQQEPPPPPVP. Residues 26–44 are compositionally biased toward pro residues; that stretch reads LPLPQQQPPQQEPPPPPVP. Cysteine 51 and cysteine 92 form a disulfide bridge. A 4-[(2-hydroxyethoxy)carbonyl]benzoate-binding site is contributed by glycine 132. 4 disulfide bridges follow: cysteine 224/cysteine 529, cysteine 303/cysteine 320, cysteine 340/cysteine 348, and cysteine 577/cysteine 599. Residue serine 225 is the Acyl-ester intermediate of the active site. 4-[(2-hydroxyethoxy)carbonyl]benzoate is bound at residue glutamate 226. The Ca(2+) site is built by aspartate 304, aspartate 307, leucine 309, aspartate 311, and isoleucine 313. 4-[(2-hydroxyethoxy)carbonyl]benzoate contacts are provided by arginine 411 and serine 416. Residues aspartate 492 and histidine 528 each act as charge relay system in the active site. Histidine 528 is a binding site for 4-[(2-hydroxyethoxy)carbonyl]benzoate.

It belongs to the tannase family.

It is found in the cell outer membrane. The catalysed reaction is 4-[(2-hydroxyethoxy)carbonyl]benzoate + H2O = terephthalate + ethylene glycol + H(+). In terms of biological role, involved in the degradation and assimilation of the plastic poly(ethylene terephthalate) (PET), which allows I.sakaiensis to use PET as its major energy and carbon source for growth. Likely acts synergistically with PETase to depolymerize PET. Catalyzes the hydrolysis of mono(2-hydroxyethyl) terephthalate (MHET) into its two environmentally benign monomers, terephthalate and ethylene glycol. Does not show activity against PET, bis(hydroxyethyl) terephthalate (BHET), pNP-aliphatic esters or typical aromatic ester compounds catalyzed by the tannase family enzymes, such as ethyl gallate and ethyl ferulate. The protein is Mono(2-hydroxyethyl) terephthalate hydrolase of Piscinibacter sakaiensis (Ideonella sakaiensis).